The sequence spans 528 residues: Ceramide glucosyltransferase (528 aa).

Residues 1–6 lie on the Lumenal side of the membrane; that stretch reads MYSFIE. A helical transmembrane segment spans residues 7-27; sequence CIAGALFVLGCVVVTLVVIGV. Residues 28–369 are Cytoplasmic-facing; that stretch reads RALLYNFRNR…TVLSATILEP (342 aa). A short sequence motif (D1) is located at residue Asp-94. Asp-154 is a short sequence motif (D2). A short sequence motif (D3) is located at residue Asp-308. The Proton acceptor role is filled by Asp-308. The (Q/R)XXRW signature appears at 349 to 353; that stretch reads RRSRW. Residues 370-390 traverse the membrane as a helical segment; the sequence is FTECFLFATYMSLAMTTIPVL. Residues 391 to 402 lie on the Lumenal side of the membrane; the sequence is SQNLGIPKTWNA. Residues 403–423 form a helical membrane-spanning segment; it reads TAIAWFTITTLWMLIDYIGYL. The Cytoplasmic portion of the chain corresponds to 424–457; the sequence is RLHSGVTMEVDEHTPYFAKGFKNTGGIKRRPFLE. Residues 458-478 form a helical membrane-spanning segment; the sequence is FLAAWIGREGLAFPVWAYAVV. The Lumenal portion of the chain corresponds to 479 to 528; sequence FGNTVNWRGRLFYIHWDTTVDAVEPREERTREVRTPELERGPSRNKHRVD. Residues 503–528 are disordered; that stretch reads PREERTREVRTPELERGPSRNKHRVD.

Belongs to the glycosyltransferase 2 family.

It localises to the golgi apparatus membrane. The enzyme catalyses an N-acylsphing-4-enine + UDP-alpha-D-glucose = a beta-D-glucosyl-(1&lt;-&gt;1')-N-acylsphing-4-enine + UDP + H(+). It functions in the pathway lipid metabolism; sphingolipid metabolism. Catalyzes the final step in the biosynthesis of the membrane lipid glucosylceramide (GluCer), the transfer of glucose to ceramide. Glucosylceramides play important roles in growth, differentiation and pathogenicity. Contribution to fungal pathogenesis is host-dependent. In Gibberella zeae (strain ATCC MYA-4620 / CBS 123657 / FGSC 9075 / NRRL 31084 / PH-1) (Wheat head blight fungus), this protein is Ceramide glucosyltransferase.